Here is a 508-residue protein sequence, read N- to C-terminus: Maturase K (508 aa).

The protein belongs to the intron maturase 2 family. MatK subfamily.

Its subcellular location is the plastid. It is found in the chloroplast. Functionally, usually encoded in the trnK tRNA gene intron. Probably assists in splicing its own and other chloroplast group II introns. The chain is Maturase K from Verbena rigida (Tuberous vervain).